The primary structure comprises 264 residues: Acetylglutamate kinase (264 aa).

Residues 50-51, arginine 72, and asparagine 164 contribute to the substrate site; that span reads GG.

This sequence belongs to the acetylglutamate kinase family. ArgB subfamily.

The protein resides in the cytoplasm. The catalysed reaction is N-acetyl-L-glutamate + ATP = N-acetyl-L-glutamyl 5-phosphate + ADP. It functions in the pathway amino-acid biosynthesis; L-arginine biosynthesis; N(2)-acetyl-L-ornithine from L-glutamate: step 2/4. Functionally, catalyzes the ATP-dependent phosphorylation of N-acetyl-L-glutamate. This chain is Acetylglutamate kinase, found in Moritella profunda.